The following is a 297-amino-acid chain: Mycothiol acetyltransferase (297 aa).

2 N-acetyltransferase domains span residues 8-153 (DALD…PPLP) and 156-297 (VALR…QYAL). Glutamate 36 contacts 1D-myo-inositol 2-(L-cysteinylamino)-2-deoxy-alpha-D-glucopyranoside. 80–82 (LAV) provides a ligand contact to acetyl-CoA. 1D-myo-inositol 2-(L-cysteinylamino)-2-deoxy-alpha-D-glucopyranoside contacts are provided by glutamate 183, lysine 223, and glutamate 231. Residues 235 to 237 (VGV) and 242 to 248 (QGGGLGK) each bind acetyl-CoA. Residue tyrosine 269 coordinates 1D-myo-inositol 2-(L-cysteinylamino)-2-deoxy-alpha-D-glucopyranoside. 274–279 (NSPAVR) contacts acetyl-CoA.

The protein belongs to the acetyltransferase family. MshD subfamily. In terms of assembly, monomer.

It carries out the reaction 1D-myo-inositol 2-(L-cysteinylamino)-2-deoxy-alpha-D-glucopyranoside + acetyl-CoA = mycothiol + CoA + H(+). In terms of biological role, catalyzes the transfer of acetyl from acetyl-CoA to desacetylmycothiol (Cys-GlcN-Ins) to form mycothiol. This is Mycothiol acetyltransferase from Actinosynnema mirum (strain ATCC 29888 / DSM 43827 / JCM 3225 / NBRC 14064 / NCIMB 13271 / NRRL B-12336 / IMRU 3971 / 101).